Here is a 186-residue protein sequence, read N- to C-terminus: Probable chorismate pyruvate-lyase (186 aa).

Substrate is bound by residues R80, L118, and E170.

The protein belongs to the UbiC family.

It localises to the cytoplasm. The catalysed reaction is chorismate = 4-hydroxybenzoate + pyruvate. It functions in the pathway cofactor biosynthesis; ubiquinone biosynthesis. Functionally, removes the pyruvyl group from chorismate, with concomitant aromatization of the ring, to provide 4-hydroxybenzoate (4HB) for the ubiquinone pathway. This Pseudomonas savastanoi pv. phaseolicola (strain 1448A / Race 6) (Pseudomonas syringae pv. phaseolicola (strain 1448A / Race 6)) protein is Probable chorismate pyruvate-lyase.